The sequence spans 140 residues: Biopolymer transport protein exbD1 (140 aa).

At 1–16 (MAFSSGNSGGPMADIN) the chain is on the cytoplasmic side. A helical transmembrane segment spans residues 17–37 (VTPLVDVMLVLLIIFIITAPL). The Periplasmic portion of the chain corresponds to 38 to 140 (MSHKVKVELP…GFVATKEKGQ (103 aa)).

It belongs to the ExbD/TolR family. In terms of assembly, the accessory proteins ExbB and ExbD seem to form a complex with TonB.

It is found in the cell inner membrane. Involved in the TonB-dependent energy-dependent transport of various receptor-bound substrates. This is Biopolymer transport protein exbD1 (exbD1) from Xanthomonas campestris pv. campestris (strain B100).